The primary structure comprises 304 residues: Porphobilinogen deaminase (304 aa).

C240 bears the S-(dipyrrolylmethanemethyl)cysteine mark.

This sequence belongs to the HMBS family. In terms of assembly, monomer. Dipyrromethane serves as cofactor.

The catalysed reaction is 4 porphobilinogen + H2O = hydroxymethylbilane + 4 NH4(+). Its pathway is porphyrin-containing compound metabolism; protoporphyrin-IX biosynthesis; coproporphyrinogen-III from 5-aminolevulinate: step 2/4. Functionally, tetrapolymerization of the monopyrrole PBG into the hydroxymethylbilane pre-uroporphyrinogen in several discrete steps. The polypeptide is Porphobilinogen deaminase (Xanthomonas oryzae pv. oryzae (strain KACC10331 / KXO85)).